Here is a 118-residue protein sequence, read N- to C-terminus: Ribosome-binding factor A (118 aa).

The protein belongs to the RbfA family. In terms of assembly, monomer. Binds 30S ribosomal subunits, but not 50S ribosomal subunits or 70S ribosomes.

The protein localises to the cytoplasm. Functionally, one of several proteins that assist in the late maturation steps of the functional core of the 30S ribosomal subunit. Associates with free 30S ribosomal subunits (but not with 30S subunits that are part of 70S ribosomes or polysomes). Required for efficient processing of 16S rRNA. May interact with the 5'-terminal helix region of 16S rRNA. The protein is Ribosome-binding factor A of Dehalococcoides mccartyi (strain ATCC BAA-2100 / JCM 16839 / KCTC 5957 / BAV1).